A 358-amino-acid chain; its full sequence is UDP-N-acetylglucosamine--N-acetylmuramyl-(pentapeptide) pyrophosphoryl-undecaprenol N-acetylglucosamine transferase (358 aa).

UDP-N-acetyl-alpha-D-glucosamine-binding positions include 13–15, asparagine 125, arginine 162, serine 190, isoleucine 244, 263–268, and glutamine 289; these read TGG and ALTVAE.

This sequence belongs to the glycosyltransferase 28 family. MurG subfamily.

Its subcellular location is the cell inner membrane. It carries out the reaction di-trans,octa-cis-undecaprenyl diphospho-N-acetyl-alpha-D-muramoyl-L-alanyl-D-glutamyl-meso-2,6-diaminopimeloyl-D-alanyl-D-alanine + UDP-N-acetyl-alpha-D-glucosamine = di-trans,octa-cis-undecaprenyl diphospho-[N-acetyl-alpha-D-glucosaminyl-(1-&gt;4)]-N-acetyl-alpha-D-muramoyl-L-alanyl-D-glutamyl-meso-2,6-diaminopimeloyl-D-alanyl-D-alanine + UDP + H(+). It functions in the pathway cell wall biogenesis; peptidoglycan biosynthesis. Its function is as follows. Cell wall formation. Catalyzes the transfer of a GlcNAc subunit on undecaprenyl-pyrophosphoryl-MurNAc-pentapeptide (lipid intermediate I) to form undecaprenyl-pyrophosphoryl-MurNAc-(pentapeptide)GlcNAc (lipid intermediate II). This chain is UDP-N-acetylglucosamine--N-acetylmuramyl-(pentapeptide) pyrophosphoryl-undecaprenol N-acetylglucosamine transferase, found in Halorhodospira halophila (strain DSM 244 / SL1) (Ectothiorhodospira halophila (strain DSM 244 / SL1)).